A 294-amino-acid chain; its full sequence is Ethanolamine ammonia-lyase small subunit (294 aa).

The adenosylcob(III)alamin site is built by Val-207 and Glu-228.

It belongs to the EutC family. As to quaternary structure, the basic unit is a heterodimer which dimerizes to form tetramers. The heterotetramers trimerize; 6 large subunits form a core ring with 6 small subunits projecting outwards. Adenosylcob(III)alamin is required as a cofactor.

It is found in the bacterial microcompartment. The enzyme catalyses ethanolamine = acetaldehyde + NH4(+). Its pathway is amine and polyamine degradation; ethanolamine degradation. Functionally, catalyzes the deamination of various vicinal amino-alcohols to oxo compounds. Allows this organism to utilize ethanolamine as the sole source of nitrogen and carbon in the presence of external vitamin B12. The protein is Ethanolamine ammonia-lyase small subunit of Clostridium tetani (strain Massachusetts / E88).